The following is a 55-amino-acid chain: ATP synthase F(0) complex subunit 8 (55 aa).

The helical transmembrane segment at 7–24 threads the bilayer; that stretch reads APWFSIMIMTWLTLALLI. The disordered stretch occupies residues 34 to 55; the sequence is TNPPSSKPSLTTKPTPWAWPWT.

The protein belongs to the ATPase protein 8 family. As to quaternary structure, component of the ATP synthase complex composed at least of ATP5F1A/subunit alpha, ATP5F1B/subunit beta, ATP5MC1/subunit c (homooctomer), MT-ATP6/subunit a, MT-ATP8/subunit 8, ATP5ME/subunit e, ATP5MF/subunit f, ATP5MG/subunit g, ATP5MK/subunit k, ATP5MJ/subunit j, ATP5F1C/subunit gamma, ATP5F1D/subunit delta, ATP5F1E/subunit epsilon, ATP5PF/subunit F6, ATP5PB/subunit b, ATP5PD/subunit d, ATP5PO/subunit OSCP. ATP synthase complex consists of a soluble F(1) head domain (subunits alpha(3) and beta(3)) - the catalytic core - and a membrane F(0) domain - the membrane proton channel (subunits c, a, 8, e, f, g, k and j). These two domains are linked by a central stalk (subunits gamma, delta, and epsilon) rotating inside the F1 region and a stationary peripheral stalk (subunits F6, b, d, and OSCP).

The protein resides in the mitochondrion membrane. In terms of biological role, subunit 8, of the mitochondrial membrane ATP synthase complex (F(1)F(0) ATP synthase or Complex V) that produces ATP from ADP in the presence of a proton gradient across the membrane which is generated by electron transport complexes of the respiratory chain. ATP synthase complex consist of a soluble F(1) head domain - the catalytic core - and a membrane F(1) domain - the membrane proton channel. These two domains are linked by a central stalk rotating inside the F(1) region and a stationary peripheral stalk. During catalysis, ATP synthesis in the catalytic domain of F(1) is coupled via a rotary mechanism of the central stalk subunits to proton translocation. In vivo, can only synthesize ATP although its ATP hydrolase activity can be activated artificially in vitro. Part of the complex F(0) domain. The sequence is that of ATP synthase F(0) complex subunit 8 from Aythya americana (Redhead).